The chain runs to 442 residues: MYLPQEIIRKKRDGEVLTADEINFFIQGVANNTVSEGQIAAFAMTIFFNEMTMDERIALTCAMRDSGMVIDWSHMNFGGPIVDKHSTGGVGDVTSLMLGPMVAACGGFVPMISGRGLGHTGGTLDKLEAIPGYNITPTNEVFGQVTKDAGVAIIGQTGDLAPADKRVYATRDITATVDNISLITASILSKKLAAGLESLVMDVKVGSGAFMPTYEASEELAKSIVAVANGAGTKTTAILTDMNQVLASSAGNAVEVREAVRFLTGEYRNPRLLEVTMASCAEMLVLAKLAENTDDARAKLMEVLDNGKAAACFGKMVAGLGGPADFVENYDNYLEKAEIIKPVYATETGIVSAMDTRAIGMAVVSMGGGRRVATDEIDYAVGFDNFIRLGEVADSDKPLAVIHARSEGQWEEAAKALRSAIKVGGEYTPTPEVYRQIRAEDI.

Belongs to the thymidine/pyrimidine-nucleoside phosphorylase family. As to quaternary structure, homodimer.

The catalysed reaction is thymidine + phosphate = 2-deoxy-alpha-D-ribose 1-phosphate + thymine. The protein operates within pyrimidine metabolism; dTMP biosynthesis via salvage pathway; dTMP from thymine: step 1/2. In terms of biological role, the enzymes which catalyze the reversible phosphorolysis of pyrimidine nucleosides are involved in the degradation of these compounds and in their utilization as carbon and energy sources, or in the rescue of pyrimidine bases for nucleotide synthesis. The polypeptide is Thymidine phosphorylase (Vibrio parahaemolyticus serotype O3:K6 (strain RIMD 2210633)).